The sequence spans 927 residues: Protein translocase subunit SecA (927 aa).

ATP contacts are provided by residues Gln86, 104–108 (GEGKT), and Asp494. The disordered stretch occupies residues 853 to 927 (YTAPDEDGTP…GSKAKRGKRR (75 aa)). Residues 860–879 (GTPHAEVEAVDPGARERTSE) are compositionally biased toward basic and acidic residues. A compositionally biased stretch (basic residues) spans 907–927 (RAKRRGASARSGSKAKRGKRR).

Belongs to the SecA family. In terms of assembly, monomer and homodimer. Part of the essential Sec protein translocation apparatus which comprises SecA, SecYEG and auxiliary proteins SecDF. Other proteins may also be involved.

The protein localises to the cell membrane. The protein resides in the cytoplasm. The catalysed reaction is ATP + H2O + cellular proteinSide 1 = ADP + phosphate + cellular proteinSide 2.. Its function is as follows. Part of the Sec protein translocase complex. Interacts with the SecYEG preprotein conducting channel. Has a central role in coupling the hydrolysis of ATP to the transfer of proteins into and across the cell membrane, serving as an ATP-driven molecular motor driving the stepwise translocation of polypeptide chains across the membrane. The polypeptide is Protein translocase subunit SecA (Kocuria rhizophila (strain ATCC 9341 / DSM 348 / NBRC 103217 / DC2201)).